A 119-amino-acid chain; its full sequence is Large ribosomal subunit protein bL20 (119 aa).

The protein belongs to the bacterial ribosomal protein bL20 family.

In terms of biological role, binds directly to 23S ribosomal RNA and is necessary for the in vitro assembly process of the 50S ribosomal subunit. It is not involved in the protein synthesizing functions of that subunit. The sequence is that of Large ribosomal subunit protein bL20 from Xylella fastidiosa (strain M12).